The primary structure comprises 415 residues: Mitogen-activated protein kinase mpkC (415 aa).

Residues 20–299 (YANLQPVGLG…AEQGLMHPWM (280 aa)) form the Protein kinase domain. ATP-binding positions include 26–34 (VGLGTAGVV) and Lys-49. Residue Asp-141 is the Proton acceptor of the active site. Thr-171 carries the post-translational modification Phosphothreonine. Positions 171–173 (TGY) match the TXY motif. Tyr-173 carries the post-translational modification Phosphotyrosine.

This sequence belongs to the protein kinase superfamily. Ser/Thr protein kinase family. MAP kinase subfamily. HOG1 sub-subfamily. Mg(2+) serves as cofactor. In terms of processing, dually phosphorylated on Thr-171 and Tyr-173, which activates the enzyme.

The catalysed reaction is L-seryl-[protein] + ATP = O-phospho-L-seryl-[protein] + ADP + H(+). The enzyme catalyses L-threonyl-[protein] + ATP = O-phospho-L-threonyl-[protein] + ADP + H(+). Its activity is regulated as follows. Activated by tyrosine and threonine phosphorylation. In terms of biological role, mitogen-activated protein kinase required for growth on media where sorbitol or mannitol is the sole carbon source. The sequence is that of Mitogen-activated protein kinase mpkC (mpkC) from Emericella nidulans (strain FGSC A4 / ATCC 38163 / CBS 112.46 / NRRL 194 / M139) (Aspergillus nidulans).